Here is a 499-residue protein sequence, read N- to C-terminus: Glycerol kinase (499 aa).

ADP is bound at residue T15. 3 residues coordinate ATP: T15, T16, and S17. T15 contacts sn-glycerol 3-phosphate. Residue R19 participates in ADP binding. Sn-glycerol 3-phosphate is bound by residues R85, E86, Y137, and D246. Residues R85, E86, Y137, D246, and Q247 each coordinate glycerol. Positions 268 and 311 each coordinate ADP. T268, G311, Q315, and G412 together coordinate ATP. 2 residues coordinate ADP: G412 and N416.

Belongs to the FGGY kinase family.

It carries out the reaction glycerol + ATP = sn-glycerol 3-phosphate + ADP + H(+). Its pathway is polyol metabolism; glycerol degradation via glycerol kinase pathway; sn-glycerol 3-phosphate from glycerol: step 1/1. Its activity is regulated as follows. Inhibited by fructose 1,6-bisphosphate (FBP). Functionally, key enzyme in the regulation of glycerol uptake and metabolism. Catalyzes the phosphorylation of glycerol to yield sn-glycerol 3-phosphate. The chain is Glycerol kinase from Parabacteroides distasonis (strain ATCC 8503 / DSM 20701 / CIP 104284 / JCM 5825 / NCTC 11152).